Reading from the N-terminus, the 267-residue chain is Dolichol-phosphate mannosyltransferase (267 aa).

Serine 2 carries the N-acetylserine modification. Residues 2–238 (SIEYSVIVPA…QQLKELYVFK (237 aa)) are Cytoplasmic-facing. Residues proline 10, tyrosine 12, glutamate 14, valine 42, aspartate 44, aspartate 95, alanine 96, aspartate 97, glutamine 99, and arginine 122 each contribute to the GDP-alpha-D-mannose site. Mg(2+) contacts are provided by aspartate 97 and glutamine 99. Mn(2+) is bound by residues aspartate 97 and glutamine 99. Serine 141 bears the Phosphoserine; by PKA mark. Positions 183, 212, and 218 each coordinate GDP-alpha-D-mannose. Residues 239–259 (FGANNLILFITFWSILFFYVC) traverse the membrane as a helical; Anchor for type IV membrane protein segment. Over 260–267 (YQLYHLVF) the chain is Lumenal.

This sequence belongs to the glycosyltransferase 2 family. As to quaternary structure, interacts with the C-terminus of SAC1, thereby sequestering it to the endoplasmic reticulum in exponentially growing cells. Under nutrient limitation conditions, this interaction is rapidly abolished. Mg(2+) is required as a cofactor. Mn(2+) serves as cofactor. Requires Ca(2+) as cofactor.

It localises to the endoplasmic reticulum membrane. The catalysed reaction is a di-trans,poly-cis-dolichyl phosphate + GDP-alpha-D-mannose = a di-trans,poly-cis-dolichyl beta-D-mannosyl phosphate + GDP. The protein operates within protein modification; protein glycosylation. Inhibited by acetylsalicylic acid (aspirin). Functionally, transfers mannose from GDP-mannose to dolichol monophosphate to form dolichol phosphate mannose (Dol-P-Man) which is the mannosyl donor in pathways leading to N-glycosylation, glycosyl phosphatidylinositol membrane anchoring, and O-mannosylation of proteins. The polypeptide is Dolichol-phosphate mannosyltransferase (Saccharomyces cerevisiae (strain ATCC 204508 / S288c) (Baker's yeast)).